A 184-amino-acid chain; its full sequence is ADP-ribosylation factor-like protein 2 (184 aa).

G2 is lipidated: N-myristoyl glycine. GTP is bound by residues 23-30 (GLDNAGKT), 66-70 (DIGGQ), and 125-128 (NKQD).

The protein belongs to the small GTPase superfamily. Arf family.

Its function is as follows. May be involved in trafficking events within the endosomal system. In Dictyostelium discoideum (Social amoeba), this protein is ADP-ribosylation factor-like protein 2 (arl2).